A 386-amino-acid chain; its full sequence is Sulfate adenylyltransferase (386 aa).

The protein belongs to the sulfate adenylyltransferase family.

The enzyme catalyses sulfate + ATP + H(+) = adenosine 5'-phosphosulfate + diphosphate. It functions in the pathway sulfur metabolism; hydrogen sulfide biosynthesis; sulfite from sulfate: step 1/3. In Persephonella marina (strain DSM 14350 / EX-H1), this protein is Sulfate adenylyltransferase.